The following is a 1500-amino-acid chain: Carbamoyl-phosphate synthase [ammonia], mitochondrial (1500 aa).

The N-terminal 38 residues, Met-1–Leu-38, are a transit peptide targeting the mitochondrion. Residues Leu-39–Thr-218 form an anthranilate phosphoribosyltransferase homolog region. Residues Lys-55, Lys-57, and Lys-119 each carry the N6-acetyllysine; alternate modification. Residue Lys-55 is modified to N6-glutaryllysine; alternate. 3 positions are modified to N6-succinyllysine; alternate: Lys-55, Lys-57, and Lys-119. Ser-148 is modified (phosphoserine). Residues Lys-157 and Lys-171 each carry the N6-acetyllysine; alternate modification. Lys-157 bears the N6-succinyllysine; alternate mark. Lys-171 carries the N6-glutaryllysine; alternate modification. N6-glutaryllysine is present on Lys-176. Lys-182 and Lys-197 each carry N6-acetyllysine. An N6-acetyllysine; alternate mark is found at Lys-207, Lys-210, Lys-214, Lys-219, and Lys-228. Lys-207, Lys-210, Lys-214, Lys-219, and Lys-228 each carry N6-glutaryllysine; alternate. Residue Lys-207 is modified to N6-succinyllysine; alternate. Residue Lys-214 is modified to N6-succinyllysine; alternate. The Glutamine amidotransferase type-1 domain maps to Lys-219 to Thr-404. Lys-237 is modified (N6-glutaryllysine). N6-acetyllysine; alternate is present on residues Lys-280, Lys-287, Lys-307, and Lys-310. Lys-280 is modified (N6-glutaryllysine; alternate). N6-succinyllysine; alternate occurs at positions 287 and 307. 2 positions are modified to N6-glutaryllysine; alternate: Lys-307 and Lys-310. At Lys-400 the chain carries N6-succinyllysine. Lys-402, Lys-412, Lys-453, and Lys-458 each carry N6-glutaryllysine; alternate. N6-succinyllysine; alternate occurs at positions 402 and 412. Residues Lys-412, Lys-453, Lys-458, Lys-522, Lys-527, and Lys-532 each carry the N6-acetyllysine; alternate modification. N6-succinyllysine; alternate is present on residues Lys-458, Lys-522, and Lys-527. 2 positions are modified to N6-glutaryllysine; alternate: Lys-527 and Lys-532. Ser-537 carries the post-translational modification Phosphoserine; alternate. Ser-537 carries an O-linked (GlcNAc) serine; alternate glycan. Ser-540 is modified (phosphoserine). The region spanning Ser-551–Leu-743 is the ATP-grasp 1 domain. An N6-acetyllysine; alternate mark is found at Lys-553 and Lys-560. Lys-553 is subject to N6-glutaryllysine; alternate. 2 positions are modified to N6-succinyllysine; alternate: Lys-553 and Lys-560. Ser-569 carries the phosphoserine modification. N6-acetyllysine; alternate occurs at positions 575 and 612. N6-succinyllysine; alternate is present on residues Lys-575 and Lys-612. At Lys-630 the chain carries N6-acetyllysine. Position 728 is an N6-glutaryllysine (Lys-728). Residues Lys-751, Lys-757, Lys-772, Lys-793, Lys-811, and Lys-831 each carry the N6-acetyllysine; alternate modification. N6-succinyllysine; alternate occurs at positions 751 and 757. N6-glutaryllysine; alternate is present on residues Lys-757, Lys-772, Lys-793, and Lys-811. N6-succinyllysine; alternate is present on Lys-793. The residue at position 831 (Lys-831) is an N6-succinyllysine; alternate. A Phosphoserine modification is found at Ser-835. N6-acetyllysine; alternate occurs at positions 841 and 856. An N6-glutaryllysine; alternate mark is found at Lys-841 and Lys-856. Lys-869 is subject to N6-glutaryllysine. Residues Lys-875, Lys-889, and Lys-892 each carry the N6-acetyllysine; alternate modification. 3 positions are modified to N6-glutaryllysine; alternate: Lys-875, Lys-889, and Lys-892. 3 positions are modified to N6-succinyllysine; alternate: Lys-875, Lys-889, and Lys-892. Phosphoserine is present on residues Ser-896 and Ser-898. Lys-905 carries the post-translational modification N6-glutaryllysine. An N6-acetyllysine; alternate mark is found at Lys-908, Lys-915, and Lys-919. Residues Lys-908, Lys-915, and Lys-919 each carry the N6-glutaryllysine; alternate modification. Residues Lys-915 and Lys-919 each carry the N6-succinyllysine; alternate modification. At Lys-935 the chain carries N6-acetyllysine. Ser-1036 carries the post-translational modification Phosphoserine. Lys-1074 carries the post-translational modification N6-acetyllysine; alternate. N6-glutaryllysine; alternate is present on Lys-1074. Lys-1074 carries the N6-succinyllysine; alternate modification. 3 positions are modified to phosphoserine: Ser-1079, Ser-1090, and Ser-1093. An ATP-grasp 2 domain is found at Ser-1093–Ile-1284. N6-acetyllysine; alternate is present on Lys-1100. An N6-succinyllysine; alternate modification is found at Lys-1100. At Lys-1149 the chain carries N6-succinyllysine. Lys-1150 is modified (N6-glutaryllysine). Lys-1168 and Lys-1183 each carry N6-acetyllysine; alternate. N6-glutaryllysine; alternate occurs at positions 1168 and 1183. Lys-1168 and Lys-1183 each carry N6-succinyllysine; alternate. Position 1203 is a phosphoserine (Ser-1203). Lys-1222 carries the N6-acetyllysine modification. Lys-1224 is modified (N6-glutaryllysine). Lys-1232, Lys-1269, and Lys-1291 each carry N6-acetyllysine; alternate. Residues Lys-1232, Lys-1269, and Lys-1291 each carry the N6-succinyllysine; alternate modification. Residue Ser-1331 is glycosylated (O-linked (GlcNAc) serine). O-linked (GlcNAc) threonine glycosylation occurs at Thr-1332. The 146-residue stretch at Phe-1355–Ala-1500 folds into the MGS-like domain. At Lys-1356 the chain carries N6-acetyllysine; alternate. 2 positions are modified to N6-glutaryllysine; alternate: Lys-1356 and Lys-1360. N6-succinyllysine; alternate is present on residues Lys-1356 and Lys-1360. Thr-1391, Thr-1394, and Trp-1410 together coordinate N-acetyl-L-glutamate. Ser-1419 and Ser-1431 each carry phosphoserine. N-acetyl-L-glutamate contacts are provided by Asn-1437 and Asn-1440. The residue at position 1444 (Lys-1444) is an N6-acetyllysine; alternate. Position 1444 is an N6-succinyllysine; alternate (Lys-1444). Asn-1449 is a binding site for N-acetyl-L-glutamate. 3 positions are modified to N6-acetyllysine; alternate: Lys-1471, Lys-1479, and Lys-1486. Residues Lys-1471, Lys-1479, and Lys-1486 each carry the N6-succinyllysine; alternate modification. N6-glutaryllysine; alternate occurs at positions 1479 and 1486.

As to quaternary structure, can form homooligomers (monomers as predominant form and dimers). Undergoes proteolytic cleavage in the C-terminal region corresponding to the loss of approximately 12 AA residues from the C-terminus. Post-translationally, succinylated at Lys-287 and Lys-1291. Desuccinylated at Lys-1291 by SIRT5, leading to activation. In terms of processing, glutarylated. Glutarylation levels increase during fasting. Deglutarylated by SIRT5 at Lys-55, Lys-219, Lys-412, Lys-889, Lys-892, Lys-915, Lys-1360 and Lys-1486, leading to activation. In terms of tissue distribution, primarily in the liver and small intestine.

Its subcellular location is the mitochondrion. The protein resides in the nucleus. The protein localises to the nucleolus. It localises to the cell membrane. The catalysed reaction is hydrogencarbonate + NH4(+) + 2 ATP = carbamoyl phosphate + 2 ADP + phosphate + 2 H(+). With respect to regulation, requires N-acetyl-L-glutamate (NAG) as an allosteric activator. Activated by glycerol in the absence of NAG, whereas in the presence of NAG it is inhibited by increasing concentrations of glycerol. In terms of biological role, involved in the urea cycle of ureotelic animals where the enzyme plays an important role in removing excess ammonia from the cell. This Homo sapiens (Human) protein is Carbamoyl-phosphate synthase [ammonia], mitochondrial (CPS1).